The chain runs to 84 residues: MAARVGAFLKNAWDKEPVLVVSFVVGGLAVILPPLSPYFKYSVMINKATPYNYPVPVRDDGNMPDVPSHPQDPQGPSLEWLKKL.

Alanine 2 is subject to N-acetylalanine. Residues 19 to 39 form a helical membrane-spanning segment; sequence LVVSFVVGGLAVILPPLSPYF. Residues 56-84 are disordered; that stretch reads PVRDDGNMPDVPSHPQDPQGPSLEWLKKL.

It belongs to the complex I NDUFA3 subunit family. In terms of assembly, complex I is composed of 45 different subunits.

It localises to the mitochondrion inner membrane. In terms of biological role, accessory subunit of the mitochondrial membrane respiratory chain NADH dehydrogenase (Complex I), that is believed not to be involved in catalysis. Complex I functions in the transfer of electrons from NADH to the respiratory chain. The immediate electron acceptor for the enzyme is believed to be ubiquinone. The chain is NADH dehydrogenase [ubiquinone] 1 alpha subcomplex subunit 3 (NDUFA3) from Homo sapiens (Human).